The primary structure comprises 311 residues: Probable deoxyhypusine synthase (311 aa).

Lys-284 (nucleophile) is an active-site residue.

The protein belongs to the deoxyhypusine synthase family. NAD(+) is required as a cofactor.

The enzyme catalyses [eIF5A protein]-L-lysine + spermidine = [eIF5A protein]-deoxyhypusine + propane-1,3-diamine. Its pathway is protein modification; eIF5A hypusination. Functionally, catalyzes the NAD-dependent oxidative cleavage of spermidine and the subsequent transfer of the butylamine moiety of spermidine to the epsilon-amino group of a specific lysine residue of the eIF-5A precursor protein to form the intermediate deoxyhypusine residue. The chain is Probable deoxyhypusine synthase from Sulfolobus acidocaldarius (strain ATCC 33909 / DSM 639 / JCM 8929 / NBRC 15157 / NCIMB 11770).